We begin with the raw amino-acid sequence, 214 residues long: Adenylate kinase (214 aa).

An ATP-binding site is contributed by 10 to 15 (GAGKGT). Residues 30–59 (STGDMFRDHKARGTEIGKQVQAIMDGGGLV) are NMP. AMP is bound by residues Thr31, Arg36, 57 to 59 (GLV), 85 to 88 (GYPR), and Gln92. The segment at 126–163 (GRRSCPRCGAVYHVSQNPPRRAGYCDRDDAELVQREDD) is LID. Arg127 provides a ligand contact to ATP. Residues Cys130 and Cys133 each coordinate Zn(2+). 136–137 (VY) is a binding site for ATP. Zn(2+)-binding residues include Cys150 and Asp153. AMP is bound by residues Arg160 and Arg171. Gly199 is an ATP binding site.

Belongs to the adenylate kinase family. In terms of assembly, monomer.

It localises to the cytoplasm. The enzyme catalyses AMP + ATP = 2 ADP. It participates in purine metabolism; AMP biosynthesis via salvage pathway; AMP from ADP: step 1/1. Its function is as follows. Catalyzes the reversible transfer of the terminal phosphate group between ATP and AMP. Plays an important role in cellular energy homeostasis and in adenine nucleotide metabolism. This Anaeromyxobacter dehalogenans (strain 2CP-C) protein is Adenylate kinase.